The primary structure comprises 337 residues: Cytoskeleton protein RodZ (337 aa).

Residues 1 to 111 (MNTEATHDQN…LGKRRKKRDG (111 aa)) are Cytoplasmic-facing. The HTH cro/C1-type domain maps to 19-71 (LRNAREQLGLSQQAVAERLCLKVSTVRDIEEDKAPADLASTFLRGYIRSYARL). The H-T-H motif DNA-binding region spans 30 to 49 (QQAVAERLCLKVSTVRDIEE). Residues 112–132 (WLMTFTWLVLFVVIGLSGAWW) form a helical; Signal-anchor for type II membrane protein membrane-spanning segment. Topologically, residues 133-337 (WQDRKAQQEE…TLNAEQSPAQ (205 aa)) are periplasmic. The span at 144 to 167 (TTMADQSSAELSSNSEQGQSVPLN) shows a compositional bias: polar residues. The segment at 144–235 (TTMADQSSAE…PTAATTPDGA (92 aa)) is disordered. The segment covering 168 to 207 (TSTTTDPATTSTPPASVDTTATNTQTPAVTAPAPAVDPQQ) has biased composition (low complexity). A compositionally biased stretch (polar residues) spans 208-218 (NAVVSPSQANV). The span at 219 to 235 (DTAATPAPTAATTPDGA) shows a compositional bias: low complexity.

Belongs to the RodZ family.

It is found in the cell inner membrane. Its function is as follows. Cytoskeletal protein that is involved in cell-shape control through regulation of the length of the long axis. In Escherichia coli (strain K12 / MC4100 / BW2952), this protein is Cytoskeleton protein RodZ.